A 285-amino-acid chain; its full sequence is 4,4'-diapophytoene synthase (285 aa).

Residues 18-21 (YSKS), tyrosine 41, and arginine 45 each bind (2E,6E)-farnesyl diphosphate. Residues aspartate 48 and aspartate 52 each coordinate Mg(2+). Glutamine 163 contacts (2E,6E)-farnesyl diphosphate. Asparagine 166 lines the Mg(2+) pocket. Arginine 169 lines the (2E,6E)-farnesyl diphosphate pocket. Mg(2+) is bound at residue aspartate 170. (2E,6E)-farnesyl diphosphate is bound at residue tyrosine 247.

It belongs to the phytoene/squalene synthase family. CrtM subfamily. Mg(2+) is required as a cofactor.

It catalyses the reaction 2 (2E,6E)-farnesyl diphosphate = 15-cis-4,4'-diapophytoene + 2 diphosphate. It participates in carotenoid biosynthesis; staphyloxanthin biosynthesis; staphyloxanthin from farnesyl diphosphate: step 1/5. Functionally, involved in the biosynthesis of the yellow-orange carotenoid staphyloxanthin, which plays a role in the virulence via its protective function against oxidative stress. Catalyzes the head-to-head condensation of two molecules of farnesyl diphosphate (FPP) into the colorless C(30) carotenoid 4,4'-diapophytoene (dehydrosqualene). This chain is 4,4'-diapophytoene synthase (crtM), found in Staphylococcus haemolyticus (strain JCSC1435).